The chain runs to 437 residues: Beta-1,3-galactosyl-O-glycosyl-glycoprotein beta-1,6-N-acetylglucosaminyltransferase 3 (437 aa).

Topologically, residues 1–12 are cytoplasmic; sequence MTSWQRLCWHYR. Residues 13 to 30 traverse the membrane as a helical; Signal-anchor for type II membrane protein segment; the sequence is LWTLGCYMLLAILALKLS. The Lumenal segment spans residues 31–437; the sequence is LRLKCDFDAM…RHKAIYGTEL (407 aa). 4 cysteine pairs are disulfide-bonded: cysteine 70-cysteine 227, cysteine 161-cysteine 381, cysteine 182-cysteine 209, and cysteine 390-cysteine 422. N-linked (GlcNAc...) asparagine glycosylation is present at asparagine 288.

This sequence belongs to the glycosyltransferase 14 family. In terms of processing, N-glycosylated.

The protein localises to the golgi apparatus membrane. The catalysed reaction is a 3-O-[beta-D-galactosyl-(1-&gt;3)-N-acetyl-alpha-D-galactosaminyl]-L-seryl-[protein] + UDP-N-acetyl-alpha-D-glucosamine = 3-O-{beta-D-galactosyl-(1-&gt;3)-[N-acetyl-beta-D-glucosaminyl-(1-&gt;6)]-N-acetyl-alpha-D-galactosaminyl}-L-seryl-[protein] + UDP + H(+). It catalyses the reaction a 3-O-[beta-D-galactosyl-(1-&gt;3)-N-acetyl-alpha-D-galactosaminyl]-L-threonyl-[protein] + UDP-N-acetyl-alpha-D-glucosamine = a 3-O-{beta-D-galactosyl-(1-&gt;3)-[N-acetyl-beta-D-glucosaminyl-(1-&gt;6)]-N-acetyl-alpha-D-galactosaminyl}-L-threonyl-[protein] + UDP + H(+). The enzyme catalyses a beta-D-Gal-(1-&gt;4)-beta-D-GlcNAc-(1-&gt;3)-beta-D-Gal-(1-&gt;4)-beta-D-GlcNAc derivative + UDP-N-acetyl-alpha-D-glucosamine = a beta-D-Gal-(1-&gt;4)-beta-D-GlcNAc-(1-&gt;3)-[beta-D-GlcNAc-(1-&gt;6)]-beta-D-Gal-(1-&gt;4)-N-acetyl-beta-D-glucosaminyl derivative + UDP + H(+). It carries out the reaction 3-O-[N-acetyl-beta-D-glucosaminyl-(1-&gt;3)-N-acetyl-alpha-D-galactosaminyl]-L-seryl-[protein] + UDP-N-acetyl-alpha-D-glucosamine = 3-O-[N-acetyl-beta-D-glucosaminyl-(1-&gt;3)-[N-acetyl-beta-D-glucosaminyl-(1-&gt;6)]-N-acetyl-alpha-D-galactosaminyl]-L-seryl-[protein] + UDP + H(+). The catalysed reaction is a 3-O-[N-acetyl-beta-D-glucosaminyl-(1-&gt;3)-N-acetyl-alpha-D-galactosaminyl]-L-threonyl-[protein] + UDP-N-acetyl-alpha-D-glucosamine = 3-O-[N-acetyl-beta-D-glucosaminyl-(1-&gt;3)-[N-acetyl-beta-D-glucosaminyl-(1-&gt;6)]-N-acetyl-alpha-D-galactosaminyl]-L-threonyl-[protein] + UDP + H(+). Its pathway is protein modification; protein glycosylation. Glycosyltransferase that can synthesize all known mucin beta 6 N-acetylglucosaminides. Mediates core 2 and core 4 O-glycan branching, 2 important steps in mucin-type biosynthesis. Also has I-branching enzyme activity by converting linear into branched poly-N-acetyllactosaminoglycans, leading to introduce the blood group I antigen during embryonic development. The sequence is that of Beta-1,3-galactosyl-O-glycosyl-glycoprotein beta-1,6-N-acetylglucosaminyltransferase 3 (Gcnt3) from Mus musculus (Mouse).